A 246-amino-acid polypeptide reads, in one-letter code: Exosome complex component SKI6 (246 aa).

Belongs to the RNase PH family. In terms of assembly, component of the RNA exosome complex. Specifically part of the catalytically inactive RNA exosome core complex (Exo-9) which may associate with the catalytic subunits RRP6 and DIS3 in cytoplasmic- and nuclear-specific RNA exosome complex forms. Exo-9 is formed by a hexameric base ring of RNase PH domain-containing subunits and a cap ring consisting of CSL4, RRP4 and RRP40.

Its subcellular location is the cytoplasm. The protein resides in the nucleus. It localises to the nucleolus. Non-catalytic component of the RNA exosome complex which has 3'-&gt;5' exoribonuclease activity and participates in a multitude of cellular RNA processing and degradation events. In the nucleus, the RNA exosome complex is involved in proper maturation of stable RNA species such as rRNA, snRNA and snoRNA, in the elimination of RNA processing by-products and non-coding 'pervasive' transcripts, such as antisense RNA species and cryptic unstable transcripts (CUTs), and of mRNAs with processing defects, thereby limiting or excluding their export to the cytoplasm. In the cytoplasm, the RNA exosome complex is involved in general mRNA turnover and in RNA surveillance pathways, preventing translation of aberrant mRNAs. The catalytic inactive RNA exosome core complex of 9 subunits (Exo-9) is proposed to play a pivotal role in the binding and presentation of RNA for ribonucleolysis, and to serve as a scaffold for the association with catalytic subunits and accessory proteins or complexes. SKI6 is part of the hexameric ring of RNase PH domain-containing subunits proposed to form a central channel which threads RNA substrates for degradation. The sequence is that of Exosome complex component SKI6 (SKI6) from Saccharomyces cerevisiae (strain ATCC 204508 / S288c) (Baker's yeast).